The chain runs to 294 residues: NAD kinase (294 aa).

Asp74 serves as the catalytic Proton acceptor. NAD(+) contacts are provided by residues 74 to 75 (DG), Arg79, 149 to 150 (NE), Asp179, 190 to 195 (TGYSMS), and Ala214.

The protein belongs to the NAD kinase family. It depends on a divalent metal cation as a cofactor.

It localises to the cytoplasm. It catalyses the reaction NAD(+) + ATP = ADP + NADP(+) + H(+). Involved in the regulation of the intracellular balance of NAD and NADP, and is a key enzyme in the biosynthesis of NADP. Catalyzes specifically the phosphorylation on 2'-hydroxyl of the adenosine moiety of NAD to yield NADP. This is NAD kinase from Flavobacterium psychrophilum (strain ATCC 49511 / DSM 21280 / CIP 103535 / JIP02/86).